The chain runs to 132 residues: Small ribosomal subunit protein uS8 (132 aa).

It belongs to the universal ribosomal protein uS8 family. As to quaternary structure, part of the 30S ribosomal subunit. Contacts proteins S5 and S12.

Its function is as follows. One of the primary rRNA binding proteins, it binds directly to 16S rRNA central domain where it helps coordinate assembly of the platform of the 30S subunit. This Borreliella afzelii (strain PKo) (Borrelia afzelii) protein is Small ribosomal subunit protein uS8.